Here is a 450-residue protein sequence, read N- to C-terminus: MPLIIPSNDIYISIISKYVAIVIFLIFVIIMFNNITHHLTQPYIDEIFHLRQCQTYCQYNFHHWDNKITTPPGLYILGFIYSEGIKILTRSSSTGGGGGGGHLTCFNDNVLRSINLIGGVVILPRILQQFHNGWSKNSKNQFFWSINIISQPLLFTYYFLFYTDVSSTILIILSLGLINYKLLQYPMLSALVGFMSLWFRQTNIIWIAFIASIFIDRQIKIKTGVIDRIRQFIMKSLTNWNKLLGYIVNIILFVIFLKLNGGITLGDNDNHQIELHIVQVFYCFTFITFFTIPNWLNKSTIKKYYNFIINHIILNLVIGLIIWYIMENFTIVHPFLLADNRHYAFYIYKRLLSQSYLKPLILMAYHFSSFQIISSLIKGGQLSFIGIFSYLIAVGLTLIPSPLFEPRYYITPLIIFNLYINHPHNLLEFIWLNSINLITSYIFLHKGIIW.

The helical transmembrane segment at 12 to 32 (ISIISKYVAIVIFLIFVIIMF) threads the bilayer. Asparagine 34 carries N-linked (GlcNAc...) asparagine glycosylation. A run of 4 helical transmembrane segments spans residues 158–178 (YFLF…LGLI), 190–210 (ALVG…IAFI), 243–263 (LLGY…NGGI), and 273–293 (IELH…FTIP). Asparagine 297 carries N-linked (GlcNAc...) asparagine glycosylation. A run of 4 helical transmembrane segments spans residues 312-332 (IILN…FTIV), 357-377 (LKPL…SSLI), 384-404 (FIGI…SPLF), and 429-449 (FIWL…KGII).

The protein belongs to the ALG10 glucosyltransferase family.

Its subcellular location is the endoplasmic reticulum membrane. It carries out the reaction an alpha-D-Glc-(1-&gt;3)-alpha-D-Glc-(1-&gt;3)-alpha-D-Man-(1-&gt;2)-alpha-D-Man-(1-&gt;2)-alpha-D-Man-(1-&gt;3)-[alpha-D-Man-(1-&gt;2)-alpha-D-Man-(1-&gt;3)-[alpha-D-Man-(1-&gt;2)-alpha-D-Man-(1-&gt;6)]-alpha-D-Man-(1-&gt;6)]-beta-D-Man-(1-&gt;4)-beta-D-GlcNAc-(1-&gt;4)-alpha-D-GlcNAc-diphospho-di-trans,poly-cis-dolichol + a di-trans,poly-cis-dolichyl beta-D-glucosyl phosphate = a alpha-D-Glc-(1-&gt;2)-alpha-D-Glc-(1-&gt;3)-alpha-D-Glc-(1-&gt;3)-alpha-D-Man-(1-&gt;2)-alpha-D-Man-(1-&gt;2)-alpha-D-Man-(1-&gt;3)-[alpha-D-Man-(1-&gt;2)-alpha-D-Man-(1-&gt;3)-[alpha-D-Man-(1-&gt;2)-alpha-D-Man-(1-&gt;6)]-alpha-D-Man-(1-&gt;6)]-beta-D-Man-(1-&gt;4)-beta-D-GlcNAc-(1-&gt;4)-alpha-D-GlcNAc-diphospho-di-trans,poly-cis-dolichol + a di-trans,poly-cis-dolichyl phosphate + H(+). Its pathway is protein modification; protein glycosylation. In terms of biological role, dol-P-Glc:Glc(2)Man(9)GlcNAc(2)-PP-Dol alpha-1,2-glucosyltransferase that operates in the biosynthetic pathway of dolichol-linked oligosaccharides, the glycan precursors employed in protein asparagine (N)-glycosylation. The assembly of dolichol-linked oligosaccharides begins on the cytosolic side of the endoplasmic reticulum membrane and finishes in its lumen. The sequential addition of sugars to dolichol pyrophosphate produces dolichol-linked oligosaccharides containing fourteen sugars, including two GlcNAcs, nine mannoses and three glucoses. Once assembled, the oligosaccharide is transferred from the lipid to nascent proteins by oligosaccharyltransferases. In the lumen of the endoplasmic reticulum, adds the third and last glucose residue from dolichyl phosphate glucose (Dol-P-Glc) onto the lipid-linked oligosaccharide intermediate Glc(2)Man(9)GlcNAc(2)-PP-Dol to produce Glc(3)Man(9)GlcNAc(2)-PP-Dol. The protein is Dol-P-Glc:Glc(2)Man(9)GlcNAc(2)-PP-Dol alpha-1,2-glucosyltransferase (DIE2) of Candida albicans (strain SC5314 / ATCC MYA-2876) (Yeast).